A 414-amino-acid chain; its full sequence is MISNLSKVLNSNVKRMYTTAKNLESVVIVSAVRTPIGSIGGSLSTIPGTKLSSITIEEAVKRAGIKPSDVDEAIIGNVISANLGQAPARQCALGAGLEQKTITTTINKVCSSGMKAIVFGAQSIALGHSKTVVAGGFESMSQVPYYADKMRFGAKYGNQTFIDGLVRDGLADAYNGSAMGVCGDDCADKYKITREQQDKFAVDSYLRALEAQKNGFFNDEIVQVPIVGRGGKVTYVVEDEEPKKVLFDKIPNLKPAFTPNGTVTPANASKLNDGASSVILMSESHAKELGLKPLARIIGYADAEQAPIEFPTAPALAIPKALKNAGINMSQVDLFEINEAFAVVGLANAKILDIDHNKLNVNGGAVALGHPIGSSGCRIVVTLTHLLQNKNLKYGVAAICNGGGGSTALVLEKL.

C110 functions as the Acyl-thioester intermediate in the catalytic mechanism. Residues Y205, 244–246 (KVL), and K249 contribute to the CoA site. K(+) is bound at residue Y205. The K(+) site is built by A266 and A268. Position 269 (S269) interacts with CoA. A K(+)-binding site is contributed by V366. Catalysis depends on proton acceptor residues H370 and C400.

This sequence belongs to the thiolase-like superfamily. Thiolase family.

The enzyme catalyses 2 acetyl-CoA = acetoacetyl-CoA + CoA. This Dictyostelium discoideum (Social amoeba) protein is Probable acetyl-CoA acetyltransferase.